Reading from the N-terminus, the 72-residue chain is LSCYLGYKHSQTCPPGENVCFVKTWCDAFCSTRGERIVMGCAATCPTAKSGVHIACCSTDNCNIYTKWGSGR.

5 disulfide bridges follow: Cys3–Cys20, Cys13–Cys41, Cys26–Cys30, Cys45–Cys56, and Cys57–Cys62. At Arg72 the chain carries Arginine amide.

This sequence belongs to the three-finger toxin family. Long-chain subfamily. Type II alpha-neurotoxin sub-subfamily. In terms of tissue distribution, expressed by the venom gland.

It is found in the secreted. In terms of biological role, binds with high affinity to muscular (alpha-1/CHRNA1) and neuronal (alpha-7/CHRNA7) nicotinic acetylcholine receptor (nAChR) and inhibits acetylcholine from binding to the receptor, thereby impairing neuromuscular and neuronal transmission. The protein is Alpha-elapitoxin-Ast2b of Hydrophis stokesii (Stokes's sea snake).